Reading from the N-terminus, the 2789-residue chain is Testis-expressed protein 15 (2789 aa).

A compositionally biased stretch (polar residues) spans 34 to 46 (HNNTGSSTVTTSK). 5 disordered regions span residues 34 to 99 (HNNT…SSEV), 169 to 191 (ENQN…AYTK), 1063 to 1166 (FSSK…EHQP), 2303 to 2331 (KNIS…DTTV), and 2351 to 2379 (KATF…DSLK). Positions 47–59 (SIKDPRLMRREES) are enriched in basic and acidic residues. Residues 80 to 98 (DNVNSEIKSTPSNSASSSE) are compositionally biased toward polar residues. A compositionally biased stretch (basic and acidic residues) spans 170-179 (NQNHSEEKAQ). A compositionally biased stretch (basic residues) spans 1063–1077 (FSSKRKYDKRRKKRA). 2 stretches are compositionally biased toward low complexity: residues 1106-1116 (RKSMASSVSKS) and 1134-1160 (SQLP…NPSL).

Belongs to the TEX15 family. As to quaternary structure, interacts with PIWIL4 and PIWIL2. Expressed in testis, predominantly in germ cells. Low expression, if any, in ovary. Also expressed in several cancers.

It is found in the cytoplasm. The protein resides in the nucleus. In terms of biological role, required during spermatogenesis for normal chromosome synapsis and meiotic recombination in germ cells. Necessary for formation of DMC1 and RAD51 foci on meiotic chromosomes, suggesting a specific role in DNA double-stranded break repair. Essential executor of PIWIL4-piRNA pathway directed transposon DNA methylation and silencing in the male embryonic germ cells. PIWIL4-piRNA binds to nascent transposon transcripts and interacts with TEX15, which may in turn recruit the epigenetic silencing machinery to the transposon loci. Not required for piRNA biosynthesis. This is Testis-expressed protein 15 (TEX15) from Homo sapiens (Human).